A 113-amino-acid polypeptide reads, in one-letter code: Ig heavy chain V-III region ABE-47N (113 aa).

Residues 1–113 (EVKLEESGGG…YWGQGTLVTV (113 aa)) form the Ig-like domain. Cys22 and Cys98 are disulfide-bonded.

This is Ig heavy chain V-III region ABE-47N from Mus musculus (Mouse).